The primary structure comprises 191 residues: MQKVLERKIDAWAQALQKRNNLDRIAYLKIKLGLEVFFNNLFKTIVVYGLALLFHVFLYTLTVHLSYFAIRHYAHGAHAKSTFACYIESIILFVILPWILIKVDIPQIFMIVLAAVAFILICLYSPAITRKQPIPNHMRKKKKITAIFVAGILLIISFFIKQPFNELVQLGIVLIGAAQLPIFFPKQTKEG.

5 consecutive transmembrane segments (helical) span residues 45-65 (IVVY…TVHL), 81-101 (STFA…WILI), 108-128 (IFMI…SPAI), 144-164 (ITAI…KQPF), and 165-185 (NELV…IFFP).

This sequence belongs to the AgrB family.

It localises to the cell membrane. Functionally, essential for the production of a quorum sensing system signal molecule, the autoinducing peptide (AIP). This quorum sensing system is responsible for the regulation of the expression of virulence factor genes. Involved in the proteolytic processing of AgrD, the precursor of AIP. This is Accessory gene regulator protein B from Staphylococcus carnosus (strain TM300).